The sequence spans 154 residues: Iron-sulfur cluster assembly 2 homolog, mitochondrial (154 aa).

Residues 1–8 (MAASRALS) constitute a mitochondrion transit peptide. Cysteine 79, cysteine 144, and cysteine 146 together coordinate Fe cation.

Belongs to the HesB/IscA family. In terms of assembly, heterotetramer; forms a dimer of dimers with IBA57. Interacts with [2Fe-2S]-ISCA2 forming the heterodimer [2Fe- 2S]-ISCA2-IBA57 complex; [2Fe-2S] cluster binding is absolutely required to promote the complex formation.

Its subcellular location is the mitochondrion. Involved in the maturation of mitochondrial 4Fe-4S proteins functioning late in the iron-sulfur cluster assembly pathway. May be involved in the binding of an intermediate of Fe/S cluster assembly. This chain is Iron-sulfur cluster assembly 2 homolog, mitochondrial (Isca2), found in Mus musculus (Mouse).